The following is a 280-amino-acid chain: Ribonuclease Z (280 aa).

Zn(2+)-binding residues include histidine 61, histidine 63, aspartate 65, histidine 66, histidine 153, aspartate 176, and histidine 240. Aspartate 65 (proton acceptor) is an active-site residue.

Belongs to the RNase Z family. In terms of assembly, homodimer. Requires Zn(2+) as cofactor.

It catalyses the reaction Endonucleolytic cleavage of RNA, removing extra 3' nucleotides from tRNA precursor, generating 3' termini of tRNAs. A 3'-hydroxy group is left at the tRNA terminus and a 5'-phosphoryl group is left at the trailer molecule.. Its function is as follows. Zinc phosphodiesterase, which displays some tRNA 3'-processing endonuclease activity. Probably involved in tRNA maturation, by removing a 3'-trailer from precursor tRNA. The sequence is that of Ribonuclease Z from Mycolicibacterium paratuberculosis (strain ATCC BAA-968 / K-10) (Mycobacterium paratuberculosis).